Consider the following 370-residue polypeptide: tRNA-specific 2-thiouridylase MnmA (370 aa).

ATP contacts are provided by residues 6–13 and Leu32; that span reads AMSGGVDS. The active-site Nucleophile is Cys101. Cys101 and Cys193 form a disulfide bridge. Gly125 contacts ATP. Positions 143 to 145 are interaction with tRNA; that stretch reads KDQ. Cys193 functions as the Cysteine persulfide intermediate in the catalytic mechanism.

The protein belongs to the MnmA/TRMU family.

The protein localises to the cytoplasm. The enzyme catalyses S-sulfanyl-L-cysteinyl-[protein] + uridine(34) in tRNA + AH2 + ATP = 2-thiouridine(34) in tRNA + L-cysteinyl-[protein] + A + AMP + diphosphate + H(+). In terms of biological role, catalyzes the 2-thiolation of uridine at the wobble position (U34) of tRNA, leading to the formation of s(2)U34. The polypeptide is tRNA-specific 2-thiouridylase MnmA (Rhodococcus erythropolis (strain PR4 / NBRC 100887)).